The following is a 156-amino-acid chain: Small ribosomal subunit protein uS7 (156 aa).

It belongs to the universal ribosomal protein uS7 family. In terms of assembly, part of the 30S ribosomal subunit. Contacts proteins S9 and S11.

In terms of biological role, one of the primary rRNA binding proteins, it binds directly to 16S rRNA where it nucleates assembly of the head domain of the 30S subunit. Is located at the subunit interface close to the decoding center, probably blocks exit of the E-site tRNA. This Pseudomonas syringae pv. tomato (strain ATCC BAA-871 / DC3000) protein is Small ribosomal subunit protein uS7.